The chain runs to 278 residues: Ras-related protein rapC (278 aa).

Gly-10–Thr-17 lines the GTP pocket. The short motif at Tyr-32–Tyr-40 is the Effector region element. GTP is bound by residues Asp-58–Thr-62 and Asn-119–Asp-122. Disordered regions lie at residues Asn-176–Ser-209 and Ser-236–Met-278. Composition is skewed to low complexity over residues Gly-198 to Ser-209 and Ser-236 to Asn-251. Cys-275 carries the post-translational modification Cysteine methyl ester. A lipid anchor (S-geranylgeranyl cysteine) is attached at Cys-275. A propeptide spans Leu-276–Met-278 (removed in mature form).

It belongs to the small GTPase superfamily. Ras family.

Its subcellular location is the cell membrane. It catalyses the reaction GTP + H2O = GDP + phosphate + H(+). The polypeptide is Ras-related protein rapC (rapC) (Dictyostelium discoideum (Social amoeba)).